Here is a 447-residue protein sequence, read N- to C-terminus: tRNA modification GTPase MnmE (447 aa).

R22, E81, and K121 together coordinate (6S)-5-formyl-5,6,7,8-tetrahydrofolate. The 157-residue stretch at 217–373 (GIVLAITGET…LMSEIVSYAE (157 aa)) folds into the TrmE-type G domain. N227 is a K(+) binding site. GTP is bound by residues 227-232 (NTGKSS), 246-252 (SDIPGTT), and 271-274 (DTAG). S231 is a binding site for Mg(2+). K(+) contacts are provided by S246, I248, and T251. T252 is a Mg(2+) binding site. K447 serves as a coordination point for (6S)-5-formyl-5,6,7,8-tetrahydrofolate.

Belongs to the TRAFAC class TrmE-Era-EngA-EngB-Septin-like GTPase superfamily. TrmE GTPase family. Homodimer. Heterotetramer of two MnmE and two MnmG subunits. K(+) serves as cofactor.

It is found in the cytoplasm. Functionally, exhibits a very high intrinsic GTPase hydrolysis rate. Involved in the addition of a carboxymethylaminomethyl (cmnm) group at the wobble position (U34) of certain tRNAs, forming tRNA-cmnm(5)s(2)U34. In Orientia tsutsugamushi (strain Boryong) (Rickettsia tsutsugamushi), this protein is tRNA modification GTPase MnmE.